We begin with the raw amino-acid sequence, 476 residues long: MVDTASKTGFISQIIGPVVDVEFPGGELPTVYSAIVVGEGESSVTCEVQQLLGSNKVRAVSMTSTDGLKRGAAVVNTGAPITVPVGVPTLGRIFNVLGEPVDEMGPCEATAGLPIHRAAPAFTDLDTKPSVFETGIKVVDLLAPYKRGGKIGLFGGAGVGKTVLIMELINNIARAHGGVSVFGGVGERTREGNDLYAEMKESGVIDEKKLDNSKVALVYGQMNEPPGARMRVGLTALTMAEYFRDVNKQDVLLFIDNIFRFVQAGSEVSALLGRMPSAVGYQPTLATEMGVLQERITSTTEGSITSIQAVYVPADDLTDPAPATTFAHLDATTVLSRGLASKGIYPAVDPLDSTSTMLQPEIVGAEHYATAQNIKETLQRYKELQDIIAILGLDELSEEDRLTVARARKVERFLSQPFFVAEVFTGSPGKYVSLADSIDGFNRLLDGEFDDLPEQSFYLVGDINEAIEKAAKINAK.

Position 155–162 (155–162 (GGAGVGKT)) interacts with ATP.

This sequence belongs to the ATPase alpha/beta chains family. In terms of assembly, F-type ATPases have 2 components, CF(1) - the catalytic core - and CF(0) - the membrane proton channel. CF(1) has five subunits: alpha(3), beta(3), gamma(1), delta(1), epsilon(1). CF(0) has four main subunits: a(1), b(1), b'(1) and c(9-12).

It localises to the plastid. The protein resides in the chloroplast thylakoid membrane. It catalyses the reaction ATP + H2O + 4 H(+)(in) = ADP + phosphate + 5 H(+)(out). Functionally, produces ATP from ADP in the presence of a proton gradient across the membrane. The catalytic sites are hosted primarily by the beta subunits. This is ATP synthase subunit beta, chloroplastic from Emiliania huxleyi (Coccolithophore).